Consider the following 520-residue polypeptide: Cholesterol side-chain cleavage enzyme, mitochondrial (520 aa).

Residues 1–39 (MLARGLPLRSALVKACPPILSTVGEGWGHHRVGTGEGAG) constitute a mitochondrion transit peptide. Cys-461 contributes to the heme binding site.

This sequence belongs to the cytochrome P450 family. In terms of assembly, interacts with FDX1/adrenodoxin. The cofactor is heme. As to expression, detected in adrenal cortex and corpus luteum (at protein level).

The protein resides in the mitochondrion inner membrane. It catalyses the reaction 6 reduced [adrenodoxin] + cholesterol + 3 O2 + 6 H(+) = 4-methylpentanal + pregnenolone + 6 oxidized [adrenodoxin] + 4 H2O. The catalysed reaction is 2 reduced [adrenodoxin] + cholesterol + O2 + 2 H(+) = (22R)-hydroxycholesterol + 2 oxidized [adrenodoxin] + H2O. It carries out the reaction (22R)-hydroxycholesterol + 2 reduced [adrenodoxin] + O2 + 2 H(+) = (20R,22R)-20,22-dihydroxycholesterol + 2 oxidized [adrenodoxin] + H2O. The enzyme catalyses (20R,22R)-20,22-dihydroxycholesterol + 2 reduced [adrenodoxin] + O2 + 2 H(+) = 4-methylpentanal + pregnenolone + 2 oxidized [adrenodoxin] + 2 H2O. It functions in the pathway lipid metabolism; C21-steroid hormone metabolism. The protein operates within steroid metabolism; cholesterol metabolism. A cytochrome P450 monooxygenase that catalyzes the side-chain hydroxylation and cleavage of cholesterol to pregnenolone, the precursor of most steroid hormones. Catalyzes three sequential oxidation reactions of cholesterol, namely the hydroxylation at C22 followed with the hydroxylation at C20 to yield 20R,22R-hydroxycholesterol that is further cleaved between C20 and C22 to yield the C21-steroid pregnenolone and 4-methylpentanal. Mechanistically, uses molecular oxygen inserting one oxygen atom into a substrate and reducing the second into a water molecule. Two electrons are provided by NADPH via a two-protein mitochondrial transfer system comprising flavoprotein FDXR (adrenodoxin/ferredoxin reductase) and nonheme iron-sulfur protein FDX1 or FDX2 (adrenodoxin/ferredoxin). The chain is Cholesterol side-chain cleavage enzyme, mitochondrial (CYP11A1) from Bos taurus (Bovine).